The sequence spans 463 residues: Fumarate hydratase class II (463 aa).

Residues 95–97 (SGT), 126–129 (HPND), 136–138 (SSN), and Thr184 each bind substrate. Residue His185 is the Proton donor/acceptor of the active site. Ser315 is an active-site residue. Substrate contacts are provided by residues Ser316 and 321–323 (KIN).

Belongs to the class-II fumarase/aspartase family. Fumarase subfamily. As to quaternary structure, homotetramer.

It is found in the cytoplasm. It catalyses the reaction (S)-malate = fumarate + H2O. The protein operates within carbohydrate metabolism; tricarboxylic acid cycle; (S)-malate from fumarate: step 1/1. Its function is as follows. Involved in the TCA cycle. Catalyzes the stereospecific interconversion of fumarate to L-malate. This Chlamydia muridarum (strain MoPn / Nigg) protein is Fumarate hydratase class II.